A 75-amino-acid chain; its full sequence is Small ribosomal subunit protein bS16 (75 aa).

Belongs to the bacterial ribosomal protein bS16 family.

This is Small ribosomal subunit protein bS16 from Nitratiruptor sp. (strain SB155-2).